A 713-amino-acid polypeptide reads, in one-letter code: Polyribonucleotide nucleotidyltransferase (713 aa).

Mg(2+) is bound by residues Asp488 and Asp494. In terms of domain architecture, KH spans Pro555–Ile614. Residues Gly624–Lys692 form the S1 motif domain.

This sequence belongs to the polyribonucleotide nucleotidyltransferase family. Mg(2+) serves as cofactor.

The protein resides in the cytoplasm. The catalysed reaction is RNA(n+1) + phosphate = RNA(n) + a ribonucleoside 5'-diphosphate. Its function is as follows. Involved in mRNA degradation. Catalyzes the phosphorolysis of single-stranded polyribonucleotides processively in the 3'- to 5'-direction. This is Polyribonucleotide nucleotidyltransferase from Brucella anthropi (strain ATCC 49188 / DSM 6882 / CCUG 24695 / JCM 21032 / LMG 3331 / NBRC 15819 / NCTC 12168 / Alc 37) (Ochrobactrum anthropi).